We begin with the raw amino-acid sequence, 660 residues long: Putative ABC transporter ATP-binding MG390 homolog (660 aa).

The Peptidase C39 domain maps to 6–126; sequence QEQPNECGIC…KQWTGYAATV (121 aa). Residue Cys-12 is part of the active site. The next 6 helical transmembrane spans lie at 150–170, 188–208, 265–285, 290–310, 379–399, and 402–422; these read LIIF…LLAT, IVVF…LYAL, HIPN…LIGI, FLWI…YDFF, SFAQ…GIIE, and YTLA…AYAT. The region spanning 464–660 is the ABC transporter domain; that stretch reads INLNNCSITL…INLSPYLQQT (197 aa). Residue 494-501 participates in ATP binding; that stretch reads GENGSGKS.

The protein belongs to the ABC transporter superfamily.

It is found in the cell membrane. The protein is Putative ABC transporter ATP-binding MG390 homolog of Mycoplasma pneumoniae (strain ATCC 29342 / M129 / Subtype 1) (Mycoplasmoides pneumoniae).